Reading from the N-terminus, the 368-residue chain is Type 2 DNA topoisomerase 6 subunit A (368 aa).

In terms of domain architecture, Topo IIA-type catalytic spans 9–148; the sequence is PDTEEAREQL…FHMRPEESGA (140 aa). The active-site O-(5'-phospho-DNA)-tyrosine intermediate is tyrosine 103. Mg(2+) is bound by residues glutamate 201 and aspartate 253.

Belongs to the TOP6A family. Homodimer. Heterotetramer of two Top6A and two Top6B chains. Requires Mg(2+) as cofactor.

It carries out the reaction ATP-dependent breakage, passage and rejoining of double-stranded DNA.. Its function is as follows. Relaxes both positive and negative superturns and exhibits a strong decatenase activity. The sequence is that of Type 2 DNA topoisomerase 6 subunit A from Haloarcula marismortui (strain ATCC 43049 / DSM 3752 / JCM 8966 / VKM B-1809) (Halobacterium marismortui).